The sequence spans 207 residues: LexA repressor (207 aa).

Residues 29–49 (VREICSAVDLSSTSTVHGHLA) constitute a DNA-binding region (H-T-H motif). Catalysis depends on for autocatalytic cleavage activity residues serine 128 and lysine 166.

The protein belongs to the peptidase S24 family. As to quaternary structure, homodimer.

The enzyme catalyses Hydrolysis of Ala-|-Gly bond in repressor LexA.. Represses a number of genes involved in the response to DNA damage (SOS response), including recA and lexA. In the presence of single-stranded DNA, RecA interacts with LexA causing an autocatalytic cleavage which disrupts the DNA-binding part of LexA, leading to derepression of the SOS regulon and eventually DNA repair. The chain is LexA repressor from Lactobacillus gasseri (strain ATCC 33323 / DSM 20243 / BCRC 14619 / CIP 102991 / JCM 1131 / KCTC 3163 / NCIMB 11718 / NCTC 13722 / AM63).